Reading from the N-terminus, the 252-residue chain is Hydroxyacylglutathione hydrolase (252 aa).

Zn(2+)-binding residues include His-54, His-56, Asp-58, His-59, His-111, Asp-130, and His-170.

It belongs to the metallo-beta-lactamase superfamily. Glyoxalase II family. As to quaternary structure, monomer. Zn(2+) serves as cofactor.

The catalysed reaction is an S-(2-hydroxyacyl)glutathione + H2O = a 2-hydroxy carboxylate + glutathione + H(+). The protein operates within secondary metabolite metabolism; methylglyoxal degradation; (R)-lactate from methylglyoxal: step 2/2. Its function is as follows. Thiolesterase that catalyzes the hydrolysis of S-D-lactoyl-glutathione to form glutathione and D-lactic acid. This chain is Hydroxyacylglutathione hydrolase, found in Francisella tularensis subsp. novicida (strain U112).